The following is a 156-amino-acid chain: Small ribosomal subunit protein eS10 (156 aa).

The segment at 91–156 (LKRQTRPEAA…FGRGRQEQEE (66 aa)) is disordered. Residues 95 to 119 (TRPEAARPRPKEGAPRAQVGEDRAG) are compositionally biased toward basic and acidic residues.

It belongs to the eukaryotic ribosomal protein eS10 family.

The protein localises to the cytoplasm. This is Small ribosomal subunit protein eS10 (RPS10) from Lumbricus rubellus (Humus earthworm).